The chain runs to 481 residues: Proline--tRNA ligase (481 aa).

The protein belongs to the class-II aminoacyl-tRNA synthetase family. ProS type 3 subfamily. Homodimer.

The protein resides in the cytoplasm. It carries out the reaction tRNA(Pro) + L-proline + ATP = L-prolyl-tRNA(Pro) + AMP + diphosphate. Functionally, catalyzes the attachment of proline to tRNA(Pro) in a two-step reaction: proline is first activated by ATP to form Pro-AMP and then transferred to the acceptor end of tRNA(Pro). This is Proline--tRNA ligase from Chlorobium phaeovibrioides (strain DSM 265 / 1930) (Prosthecochloris vibrioformis (strain DSM 265)).